Reading from the N-terminus, the 278-residue chain is Gamma carbonic anhydrase 2, mitochondrial (278 aa).

The N-terminal 43 residues, 1 to 43 (MGTLGRAIYTVGNWIRGTGQALDRVGSLLQGSHRIEEHLSRHR), are a transit peptide targeting the mitochondrion. Substrate is bound by residues 86–88 (RGD) and 101–102 (QD). Positions 107, 130, and 135 each coordinate Zn(2+). Asn209 lines the substrate pocket.

Belongs to the gamma-class carbonic anhydrase family. Homotrimer. Component of the mitochondrial oxidoreductase respiratory chain complex I; element of the extra matrix-exposed domain, which is attached to the membrane arm of this complex. Interacts with GAMMACAL1 and GAMMACAL2. It depends on Zn(2+) as a cofactor. As to expression, constitutively expressed in roots and leaves, with higher levels in flowers, particularly in tapetal tissue of anthers, inflorescence (IM) and floral meristems (FM).

The protein resides in the mitochondrion membrane. In terms of biological role, enzyme involved in the catabolism of H(2)CO(3) but that does not mediates the reversible hydration of carbon dioxide. Mediates complex I assembly in mitochondria and respiration. Binds HCO(3)-. Required for male fertility during anther development and dehiscence to regulate the secondary thickenings of the endothecial cell wall, probably by modulating H(2)O(2)-dependent lignin polymerization. In Arabidopsis thaliana (Mouse-ear cress), this protein is Gamma carbonic anhydrase 2, mitochondrial (GAMMACA2).